Reading from the N-terminus, the 65-residue chain is Large ribosomal subunit protein bL35 (65 aa).

The tract at residues 1–22 (MPKIKTVRGAAKRFKKTGKGGF) is disordered. The span at 10 to 22 (AAKRFKKTGKGGF) shows a compositional bias: basic residues.

This sequence belongs to the bacterial ribosomal protein bL35 family.

In Klebsiella pneumoniae (strain 342), this protein is Large ribosomal subunit protein bL35.